The sequence spans 706 residues: Glutamine-dependent NAD(+) synthetase (706 aa).

The region spanning 5-275 (VTVATCALNQ…VEVLTATLDL (271 aa)) is the CN hydrolase domain. E45 (proton acceptor; for glutaminase activity) is an active-site residue. K114 functions as the For glutaminase activity in the catalytic mechanism. C175 serves as the catalytic Nucleophile; for glutaminase activity. The ligase stretch occupies residues 325–706 (YHSPAEEISL…RQRQELDGVD (382 aa)). 355-362 (PLSGGVDS) contacts ATP. The active site involves S357.

This sequence in the C-terminal section; belongs to the NAD synthetase family. Homohexamer.

It catalyses the reaction deamido-NAD(+) + L-glutamine + ATP + H2O = L-glutamate + AMP + diphosphate + NAD(+) + H(+). The protein operates within cofactor biosynthesis; NAD(+) biosynthesis; NAD(+) from deamido-NAD(+) (L-Gln route): step 1/1. Functionally, catalyzes the ATP-dependent amidation of deamido-NAD to form NAD. Uses L-glutamine as a nitrogen source. This is Glutamine-dependent NAD(+) synthetase (NADSYN1) from Bos taurus (Bovine).